Consider the following 176-residue polypeptide: Inorganic pyrophosphatase (176 aa).

Residues K30, R44, and Y56 each coordinate substrate. Residues D66, D71, and D103 each contribute to the Mg(2+) site. A substrate-binding site is contributed by Y142.

The protein belongs to the PPase family. As to quaternary structure, homohexamer. Requires Mg(2+) as cofactor.

Its subcellular location is the cytoplasm. It carries out the reaction diphosphate + H2O = 2 phosphate + H(+). Functionally, catalyzes the hydrolysis of inorganic pyrophosphate (PPi) forming two phosphate ions. This Aeropyrum pernix (strain ATCC 700893 / DSM 11879 / JCM 9820 / NBRC 100138 / K1) protein is Inorganic pyrophosphatase.